Reading from the N-terminus, the 536-residue chain is Pre-mRNA-splicing factor SLU7-B (536 aa).

The interval Met1–Pro42 is disordered. Positions Lys9–Lys25 are enriched in basic and acidic residues. A CCHC-type zinc finger spans residues Cys96–Cys109. 2 disordered regions span residues Leu176–Asp201 and Lys488–Asn507. A compositionally biased stretch (acidic residues) spans Asn187–Asp200. Position 193 is a phosphoserine (Ser193). Residues Leu486–Arg493 carry the Nuclear localization signal motif. Residues Lys488–Lys501 are compositionally biased toward basic and acidic residues.

This sequence belongs to the SLU7 family. Interacts with PHYB in photobodies under red light.

It is found in the nucleus. Participates in the second catalytic step of pre-mRNA splicing, when the free hydroxyl group of exon I attacks the 3'-splice site to generate spliced mRNA and the excised lariat intron. Splicing factor acting as a negative regulator of seedling photomorphogenesis by antagonizing PHYB signaling to promote light-induced hypocotyl elongation. Prevents the accumulation of functionally spliced RVE8a form, a circadian clock regulator mediating the transcriptional activation of clock genes containing evening elements (EE), but promotes PIF4 expression to fine-tune hypocotyl elongation in the light. Together with SMP1, involved in the timing of cell cycle arrest during leaf development, in a STRUWWELPETER (SWP) dependent manner; promotes cell proliferation in developing organs. This chain is Pre-mRNA-splicing factor SLU7-B, found in Arabidopsis thaliana (Mouse-ear cress).